A 467-amino-acid polypeptide reads, in one-letter code: Putative vacuolar protein sorting-associated protein TDA6 (467 aa).

The chain crosses the membrane as a helical span at residues 8–28; that stretch reads ILLWFLIVDLSVIRALVLPPL. 3 N-linked (GlcNAc...) asparagine glycosylation sites follow: asparagine 61, asparagine 124, and asparagine 141.

Belongs to the VPS62 family.

The protein localises to the membrane. Involved in vacuolar protein sorting. The protein is Putative vacuolar protein sorting-associated protein TDA6 (TDA6) of Saccharomyces cerevisiae (strain ATCC 204508 / S288c) (Baker's yeast).